A 210-amino-acid polypeptide reads, in one-letter code: Large ribosomal subunit protein uL3 (210 aa).

The segment at 125-151 (RHGQSRGPMSHGSRYHRRPGSMGPVAP) is disordered.

This sequence belongs to the universal ribosomal protein uL3 family. In terms of assembly, part of the 50S ribosomal subunit. Forms a cluster with proteins L14 and L19.

One of the primary rRNA binding proteins, it binds directly near the 3'-end of the 23S rRNA, where it nucleates assembly of the 50S subunit. This is Large ribosomal subunit protein uL3 from Bacillus cereus (strain Q1).